We begin with the raw amino-acid sequence, 70 residues long: Small ribosomal subunit protein bS21 (70 aa).

Belongs to the bacterial ribosomal protein bS21 family.

The polypeptide is Small ribosomal subunit protein bS21 (Paracidovorax citrulli (strain AAC00-1) (Acidovorax citrulli)).